We begin with the raw amino-acid sequence, 534 residues long: EH domain-containing protein 1 (534 aa).

Position 1 is an N-acetylmethionine (M1). The Dynamin-type G domain maps to 55-286; that stretch reads FDNKPMVLLV…DLFKDIQSLP (232 aa). The G1 motif stretch occupies residues 65–72; sequence GQYSTGKT. 65 to 72 contacts ATP; sequence GQYSTGKT. Residues 91–92 are G2 motif; sequence EP. The segment at 153 to 156 is G3 motif; that stretch reads DTPG. Residues 198–227 adopt a coiled-coil conformation; the sequence is DEFSEVIKALKNHEDKIRVVLNKADQIETQ. Positions 219 to 222 are G4 motif; it reads NKAD. An ATP-binding site is contributed by K220. Position 243 (I243) is a region of interest, G5 motif. W258 contributes to the ATP binding site. A phosphoserine mark is found at S355 and S456. An EH domain is found at 444–532; it reads DKPTYDEIFY…PHLIPPSKRR (89 aa). Residues 476–511 form the EF-hand domain; it reads LPNTVLGKIWKLADVDKDGLLDDEEFALANHLIKVK. Ca(2+)-binding residues include D489, D491, D493, and E500.

This sequence belongs to the TRAFAC class dynamin-like GTPase superfamily. Dynamin/Fzo/YdjA family. EHD subfamily. In terms of assembly, homooligomer, and heterooligomer with EHD2, EHD3 and EHD4, ATP-binding is required for heterooligomerization. Interacts (via EH domain) with MICALL1 (via NPF1 motif); the interaction is direct and recruits EHD1 to membranes. Interacts with RAB35; the interaction is indirect through MICALL1 and recruits EHD1 to membranes. Interacts (via EH domain) with PACSIN2 (via NPF motifs); regulates localization to tubular recycling endosome membranes. Interacts with PACSIN1. Interacts with RAB8A. Interacts with FER1L5 (via second C2 domain). Interacts with MYOF. Interacts with ZFYVE20. Interacts (via EH domain) with RAB11FIP2.

It localises to the recycling endosome membrane. It is found in the early endosome membrane. Its subcellular location is the cell membrane. The protein localises to the cell projection. The protein resides in the cilium membrane. In terms of biological role, ATP- and membrane-binding protein that controls membrane reorganization/tubulation upon ATP hydrolysis. In vitro causes vesiculation of endocytic membranes. Acts in early endocytic membrane fusion and membrane trafficking of recycling endosomes. Recruited to endosomal membranes upon nerve growth factor stimulation, indirectly regulates neurite outgrowth. Plays a role in myoblast fusion. Involved in the unidirectional retrograde dendritic transport of endocytosed BACE1 and in efficient sorting of BACE1 to axons implicating a function in neuronal APP processing. Plays a role in the formation of the ciliary vesicle (CV), an early step in cilium biogenesis. Proposed to be required for the fusion of distal appendage vesicles (DAVs) to form the CV by recruiting SNARE complex component SNAP29. Is required for recruitment of transition zone proteins CEP290, RPGRIP1L, TMEM67 and B9D2, and of IFT20 following DAV reorganization before Rab8-dependent ciliary membrane extension. Required for the loss of CCP110 form the mother centriole essential for the maturation of the basal body during ciliogenesis. The polypeptide is EH domain-containing protein 1 (Rattus norvegicus (Rat)).